The sequence spans 328 residues: D-cysteine desulfhydrase (328 aa).

At lysine 51 the chain carries N6-(pyridoxal phosphate)lysine.

It belongs to the ACC deaminase/D-cysteine desulfhydrase family. In terms of assembly, homodimer. Pyridoxal 5'-phosphate is required as a cofactor.

The catalysed reaction is D-cysteine + H2O = hydrogen sulfide + pyruvate + NH4(+) + H(+). Catalyzes the alpha,beta-elimination reaction of D-cysteine and of several D-cysteine derivatives. It could be a defense mechanism against D-cysteine. The polypeptide is D-cysteine desulfhydrase (Shigella boydii serotype 18 (strain CDC 3083-94 / BS512)).